We begin with the raw amino-acid sequence, 145 residues long: MAHSLRKTRKLRGHVSHGHGRIGKHRKHPGGRGNAGGQHHHRINRDKYHPGYFGKVGMRVFHLNKNHHYCPTVNVDRLWALVPEEQKTKVSAEKAPVIDCVKAGYFKVLGKGLLPKQPLIVKAKFFSHEAENKIKAAGGACILVA.

Residues 1 to 30 (MAHSLRKTRKLRGHVSHGHGRIGKHRKHPG) show a composition bias toward basic residues. Residues 1–48 (MAHSLRKTRKLRGHVSHGHGRIGKHRKHPGGRGNAGGQHHHRINRDKY) form a disordered region.

This sequence belongs to the universal ribosomal protein uL15 family. In terms of assembly, component of the large ribosomal subunit.

The protein resides in the cytoplasm. It is found in the cytosol. Its subcellular location is the rough endoplasmic reticulum. Functionally, component of the large ribosomal subunit. The polypeptide is Large ribosomal subunit protein uL15 (rpl-27a) (Oscheius tipulae).